The primary structure comprises 294 residues: N-acetylmuramic acid 6-phosphate etherase (294 aa).

In terms of domain architecture, SIS spans 56–219; the sequence is TSQALKKGGR…STLSMVSVGK (164 aa). Catalysis depends on glutamate 84, which acts as the Proton donor. The active site involves glutamate 115.

The protein belongs to the GCKR-like family. MurNAc-6-P etherase subfamily. Homodimer.

It carries out the reaction N-acetyl-D-muramate 6-phosphate + H2O = N-acetyl-D-glucosamine 6-phosphate + (R)-lactate. The protein operates within amino-sugar metabolism; 1,6-anhydro-N-acetylmuramate degradation. It participates in amino-sugar metabolism; N-acetylmuramate degradation. Its pathway is cell wall biogenesis; peptidoglycan recycling. Specifically catalyzes the cleavage of the D-lactyl ether substituent of MurNAc 6-phosphate, producing GlcNAc 6-phosphate and D-lactate. Together with AnmK, is also required for the utilization of anhydro-N-acetylmuramic acid (anhMurNAc) either imported from the medium or derived from its own cell wall murein, and thus plays a role in cell wall recycling. This is N-acetylmuramic acid 6-phosphate etherase from Francisella philomiragia subsp. philomiragia (strain ATCC 25017 / CCUG 19701 / FSC 153 / O#319-036).